The following is a 548-amino-acid chain: Isocitrate dehydrogenase [NAD(+)] 1, mitochondrial (548 aa).

The transit peptide at 1-53 (MSSLSTLRILHSTAGRRWASYYGIYPKSAACSSSSVAIARFFSTAADRPPKHA) directs the protein to the mitochondrion. Residues 132–134 (TIT) and Asn153 each bind NAD(+). D-threo-isocitrate is bound by residues 151-157 (SPNGAMR), Arg187, Tyr194, Lys266, Asp311, and Asp335. Asp311, Asp335, and Asp339 together coordinate Mg(2+). Residues 372-377 (HGTVSD) and Asn391 each bind NAD(+). Positions 499–534 (IDEEAINGLFQKYDKNGDGFIDFEEFTRMLVKMNLA) constitute an EF-hand domain. Positions 512, 514, 516, 518, and 523 each coordinate Ca(2+).

It belongs to the isocitrate and isopropylmalate dehydrogenases family. Homodimer. It depends on Mg(2+) as a cofactor. Mn(2+) is required as a cofactor.

It localises to the mitochondrion. The catalysed reaction is D-threo-isocitrate + NAD(+) = 2-oxoglutarate + CO2 + NADH. The homodimer exhibits allosteric regulation by isocitrate. Activated by Mn(2+) and Mg(2+). No activation by Na(+), K(+) or Li(+). Inhibited by Co(2+), Cu(2+) and Ni(2+), but not with Ca(2+) in the presence of Mn(2+) or Mg(2+). Competitively inhibited by NADH, but no effect on activity by 1.0 mM citrate. Strongly inhibited by excess ATP, ADP, AMP and alpha-ketoglutarate. In terms of biological role, performs an essential role in the oxidative function of the tricarboxylic acid cycle and respiration. Catalyzes the decarboxylation of isocitrate to produce 2-oxoglutarate and generate NADH to provide electrons for energy production. No activity with NADP(+). The protein is Isocitrate dehydrogenase [NAD(+)] 1, mitochondrial of Phaeodactylum tricornutum (strain CCAP 1055/1).